An 89-amino-acid polypeptide reads, in one-letter code: Small ribosomal subunit protein uS15 (89 aa).

It belongs to the universal ribosomal protein uS15 family. As to quaternary structure, part of the 30S ribosomal subunit. Forms a bridge to the 50S subunit in the 70S ribosome, contacting the 23S rRNA.

Functionally, one of the primary rRNA binding proteins, it binds directly to 16S rRNA where it helps nucleate assembly of the platform of the 30S subunit by binding and bridging several RNA helices of the 16S rRNA. Its function is as follows. Forms an intersubunit bridge (bridge B4) with the 23S rRNA of the 50S subunit in the ribosome. The polypeptide is Small ribosomal subunit protein uS15 (Thermosynechococcus vestitus (strain NIES-2133 / IAM M-273 / BP-1)).